The primary structure comprises 135 residues: Auxin-responsive protein SAUR66 (135 aa).

This sequence belongs to the ARG7 family.

It localises to the cell membrane. Functionally, may promote auxin-stimulated organ elongation, such as hypocotyls, stamen filaments and petals. The polypeptide is Auxin-responsive protein SAUR66 (Arabidopsis thaliana (Mouse-ear cress)).